The following is a 208-amino-acid chain: Uracil phosphoribosyltransferase (208 aa).

Residues R78, R103, and 130 to 138 contribute to the 5-phospho-alpha-D-ribose 1-diphosphate site; that span reads DPMLATGGS. Residues I193 and 198–200 contribute to the uracil site; that span reads GDA. D199 lines the 5-phospho-alpha-D-ribose 1-diphosphate pocket.

It belongs to the UPRTase family. Mg(2+) is required as a cofactor.

The catalysed reaction is UMP + diphosphate = 5-phospho-alpha-D-ribose 1-diphosphate + uracil. It functions in the pathway pyrimidine metabolism; UMP biosynthesis via salvage pathway; UMP from uracil: step 1/1. Its activity is regulated as follows. Allosterically activated by GTP. Its function is as follows. Catalyzes the conversion of uracil and 5-phospho-alpha-D-ribose 1-diphosphate (PRPP) to UMP and diphosphate. This Thermus thermophilus (strain ATCC 27634 / DSM 579 / HB8) protein is Uracil phosphoribosyltransferase.